Consider the following 199-residue polypeptide: uncharacterized protein (199 aa).

Transmembrane regions (helical) follow at residues 35–55, 57–77, 94–114, and 131–151; these read CELAFSILILFCAFAELIFYD, FVIFFLMIIASFVFVLLYLEF, LSAAFMSMVCWLSVLIPIFFG, and YYGCQVIFGSLLTTFAAASFA.

It localises to the membrane. This is an uncharacterized protein from Caenorhabditis elegans.